Consider the following 179-residue polypeptide: Large ribosomal subunit protein uL6 (179 aa).

It belongs to the universal ribosomal protein uL6 family. As to quaternary structure, part of the 50S ribosomal subunit.

In terms of biological role, this protein binds to the 23S rRNA, and is important in its secondary structure. It is located near the subunit interface in the base of the L7/L12 stalk, and near the tRNA binding site of the peptidyltransferase center. This is Large ribosomal subunit protein uL6 from Mycobacterium sp. (strain KMS).